Consider the following 90-residue polypeptide: Small ribosomal subunit protein uS19 (90 aa).

It belongs to the universal ribosomal protein uS19 family.

In terms of biological role, protein S19 forms a complex with S13 that binds strongly to the 16S ribosomal RNA. In Hydrogenovibrio crunogenus (strain DSM 25203 / XCL-2) (Thiomicrospira crunogena), this protein is Small ribosomal subunit protein uS19.